Reading from the N-terminus, the 88-residue chain is Elongation factor 1-beta (88 aa).

This sequence belongs to the EF-1-beta/EF-1-delta family.

In terms of biological role, promotes the exchange of GDP for GTP in EF-1-alpha/GDP, thus allowing the regeneration of EF-1-alpha/GTP that could then be used to form the ternary complex EF-1-alpha/GTP/AAtRNA. This Halorubrum lacusprofundi (strain ATCC 49239 / DSM 5036 / JCM 8891 / ACAM 34) protein is Elongation factor 1-beta.